Reading from the N-terminus, the 383-residue chain is MREHCVTSESVTEGHPDKVCDQISDGILDACVAQDPASRVAVETLVSGNIAVIAGEITTTAQIDAERTARAVIKAIGYDDPALGFDSDSCFILTNLRTQSPDINLGVSRGDELGAGDQGVFYGYACDETANLMPIPIALAHTLSLRLTMMRRDGTLPWLRPDGKVQVTMRYGRDGRPCGLDSVVVSAQHDEAVDRDTLVRGLVEGVIYPELHDWLQPGTRVLINPTGRFVVGGPAGDTGVTGRKLMVDTYGGCAQHGGGAFSGKDATKVDRTAAYMARYAAKNVVAAGLAGRCQLALAYAIGQIDPEMISVETFGTETVDGDRICAAVREVFPWTVSGMIAALELRQPRFRKTAAYGHFGREDQGFQWEKTDRSGELLALCTR.

H15 contributes to the ATP binding site. D17 is a Mg(2+) binding site. E43 contacts K(+). Residues E56 and Q99 each coordinate L-methionine. The segment at 99 to 109 is flexible loop; that stretch reads QSPDINLGVSR. ATP contacts are provided by residues 162–164, 228–229, D237, 243–244, A260, and K264; these read DGK, RF, and RK. D237 contacts L-methionine. K268 contributes to the L-methionine binding site.

The protein belongs to the AdoMet synthase family. In terms of assembly, homotetramer; dimer of dimers. Mg(2+) serves as cofactor. The cofactor is K(+).

The protein localises to the cytoplasm. It carries out the reaction L-methionine + ATP + H2O = S-adenosyl-L-methionine + phosphate + diphosphate. The protein operates within amino-acid biosynthesis; S-adenosyl-L-methionine biosynthesis; S-adenosyl-L-methionine from L-methionine: step 1/1. In terms of biological role, catalyzes the formation of S-adenosylmethionine (AdoMet) from methionine and ATP. The overall synthetic reaction is composed of two sequential steps, AdoMet formation and the subsequent tripolyphosphate hydrolysis which occurs prior to release of AdoMet from the enzyme. The polypeptide is S-adenosylmethionine synthase 1 (Rhodopseudomonas palustris (strain BisB18)).